The chain runs to 240 residues: Eukaryotic translation initiation factor 3 subunit K (240 aa).

The PCI domain maps to Tyr-41–Lys-221.

Belongs to the eIF-3 subunit K family. In terms of assembly, component of the eukaryotic translation initiation factor 3 (eIF-3) complex.

The protein localises to the cytoplasm. In terms of biological role, component of the eukaryotic translation initiation factor 3 (eIF-3) complex, which is involved in protein synthesis of a specialized repertoire of mRNAs and, together with other initiation factors, stimulates binding of mRNA and methionyl-tRNAi to the 40S ribosome. The eIF-3 complex specifically targets and initiates translation of a subset of mRNAs involved in cell proliferation. This chain is Eukaryotic translation initiation factor 3 subunit K, found in Caenorhabditis briggsae.